A 330-amino-acid chain; its full sequence is tRNA (cytosine(38)-C(5))-methyltransferase (330 aa).

An SAM-dependent MTase C5-type domain is found at leucine 7–phenylalanine 330. Residue cysteine 81 is part of the active site.

Belongs to the class I-like SAM-binding methyltransferase superfamily. C5-methyltransferase family.

Its subcellular location is the cytoplasm. It localises to the nucleus. It carries out the reaction cytidine(38) in tRNA + S-adenosyl-L-methionine = 5-methylcytidine(38) in tRNA + S-adenosyl-L-homocysteine + H(+). Its function is as follows. Specifically methylates cytosine 38 in the anticodon loop of tRNA(Asp). Can also methylate cytosine 38 in tRNA(Glu), albeit to a lower level, but not tRNA(Lys). Pmt1-dependent tRNA methylation is induced by nitrogen limitation and depends on the nutrient-sensing protein kinase sck2. Does not have DNA-methylation activity. This is tRNA (cytosine(38)-C(5))-methyltransferase (pmt1) from Schizosaccharomyces pombe (strain 972 / ATCC 24843) (Fission yeast).